The primary structure comprises 347 residues: HTH-type transcriptional regulator PhcA (347 aa).

One can recognise an HTH lysR-type domain in the interval 1–61 (MVNVDTKLLV…IRVPHGLTPT (61 aa)). A DNA-binding region (H-T-H motif) is located at residues 21 to 40 (ATYVAEKMHMTAPAVSHSLG). The tract at residues 316–347 (PMHPPMLTDDSGKSGKTGKGDAEKEDESRLSV) is disordered. A compositionally biased stretch (basic and acidic residues) spans 325–347 (DSGKSGKTGKGDAEKEDESRLSV).

The protein belongs to the LysR transcriptional regulatory family.

Its function is as follows. Regulates the transcription of one or more of the genes involved in virulence. The protein is HTH-type transcriptional regulator PhcA (phcA) of Ralstonia nicotianae (strain ATCC BAA-1114 / GMI1000) (Ralstonia solanacearum).